Reading from the N-terminus, the 143-residue chain is Large ribosomal subunit protein uL11 (143 aa).

The protein belongs to the universal ribosomal protein uL11 family. In terms of assembly, part of the ribosomal stalk of the 50S ribosomal subunit. Interacts with L10 and the large rRNA to form the base of the stalk. L10 forms an elongated spine to which L12 dimers bind in a sequential fashion forming a multimeric L10(L12)X complex. Post-translationally, one or more lysine residues are methylated.

Its function is as follows. Forms part of the ribosomal stalk which helps the ribosome interact with GTP-bound translation factors. This Psychrobacter cryohalolentis (strain ATCC BAA-1226 / DSM 17306 / VKM B-2378 / K5) protein is Large ribosomal subunit protein uL11.